A 206-amino-acid polypeptide reads, in one-letter code: ATP phosphoribosyltransferase (206 aa).

It belongs to the ATP phosphoribosyltransferase family. Short subfamily. Heteromultimer composed of HisG and HisZ subunits.

It localises to the cytoplasm. The enzyme catalyses 1-(5-phospho-beta-D-ribosyl)-ATP + diphosphate = 5-phospho-alpha-D-ribose 1-diphosphate + ATP. The protein operates within amino-acid biosynthesis; L-histidine biosynthesis; L-histidine from 5-phospho-alpha-D-ribose 1-diphosphate: step 1/9. In terms of biological role, catalyzes the condensation of ATP and 5-phosphoribose 1-diphosphate to form N'-(5'-phosphoribosyl)-ATP (PR-ATP). Has a crucial role in the pathway because the rate of histidine biosynthesis seems to be controlled primarily by regulation of HisG enzymatic activity. This Campylobacter curvus (strain 525.92) protein is ATP phosphoribosyltransferase.